The sequence spans 221 residues: Large ribosomal subunit protein uL4 (221 aa).

Positions 47-77 are disordered; the sequence is GTASTKTRGEVSGGGRKPWIQKHTGRARQGS.

Belongs to the universal ribosomal protein uL4 family. In terms of assembly, part of the 50S ribosomal subunit.

Functionally, one of the primary rRNA binding proteins, this protein initially binds near the 5'-end of the 23S rRNA. It is important during the early stages of 50S assembly. It makes multiple contacts with different domains of the 23S rRNA in the assembled 50S subunit and ribosome. In terms of biological role, forms part of the polypeptide exit tunnel. The polypeptide is Large ribosomal subunit protein uL4 (Thermosipho melanesiensis (strain DSM 12029 / CIP 104789 / BI429)).